A 75-amino-acid chain; its full sequence is Venom serine protease inhibitor BiVSPI (75 aa).

The signal sequence occupies residues 1-20; sequence MSRILFVFLAVMAIFSTSFG. 5 disulfides stabilise this stretch: C23–C55, C32–C51, C35–C47, C39–C75, and C57–C69. The region spanning 23–75 is the TIL domain; it reads CGLNEEFKSCGSCEPTCAKPRVTICTMECKIGCQCKSGYLRNGEGTCVLPEKC.

The protein belongs to the serine protease inhibitor-like (TIL domain-containing) family. In terms of processing, may be O-glycosylated. In terms of tissue distribution, expressed by the venom gland (at protein level) and expressed in fat body.

Its subcellular location is the secreted. The protein localises to the target cell membrane. Its function is as follows. Antimicrobial venom serine protease inhibitor. Exhibits inhibitory activity against chymotrypsin (IC(50)=19.56 nM, Ki=15.24 nM) and microbial serine proteases, such as subtilisin A (IC(50)=6.57 nM, Ki=6.83 nM) and proteinase K (IC(50)=7.11 nM, Ki=7.02 nM). Has not activity against trypsin, plasmin, tPA, thrombin, factor Xa or elastase. Binds and inhibits Gram-positive bacteria (B.subtilis (MIC=29.45 uM), B.thuringiensis (MIC=91.03 uM)) and the entomopathogenic fungus B.bassiana (MIC=30.09 uM) but not to E.coli. This Bombus ignitus (Bumblebee) protein is Venom serine protease inhibitor BiVSPI.